The primary structure comprises 358 residues: Fructose-bisphosphate aldolase 2, cytoplasmic (358 aa).

Arginine 39 is a binding site for substrate. Glutamate 183 acts as the Proton acceptor in catalysis. Residue lysine 225 is the Schiff-base intermediate with dihydroxyacetone-P of the active site. Residues 266 to 268 (SGG) and arginine 298 contribute to the substrate site.

It belongs to the class I fructose-bisphosphate aldolase family. As to quaternary structure, homotetramer.

The protein resides in the cytoplasm. The protein localises to the cytosol. The enzyme catalyses beta-D-fructose 1,6-bisphosphate = D-glyceraldehyde 3-phosphate + dihydroxyacetone phosphate. It functions in the pathway carbohydrate degradation; glycolysis; D-glyceraldehyde 3-phosphate and glycerone phosphate from D-glucose: step 4/4. Its function is as follows. Fructose-bisphosphate aldolase that plays a key role in glycolysis and gluconeogenesis. The chain is Fructose-bisphosphate aldolase 2, cytoplasmic from Oryza sativa subsp. japonica (Rice).